The sequence spans 217 residues: 25 kDa ookinete surface antigen (217 aa).

Positions 1–16 (MNKLYSLFLFLFIQLS) are cleaved as a signal peptide. The 30-residue stretch at 30-59 (CKKGFLIQMSGHLECKCENDLVLVNEETCE) folds into the EGF-like 1; truncated domain. EGF-like domains lie at 61–106 (KVLK…NVCI), 106–150 (ILNE…NKCS), and 153–193 (GETK…STCT). Cystine bridges form between Cys65-Cys80, Cys74-Cys92, Cys94-Cys105, Cys110-Cys120, Cys115-Cys133, Cys135-Cys149, Cys157-Cys168, Cys161-Cys177, and Cys179-Cys192. Asn112 is a glycosylation site (N-linked (GlcNAc...) asparagine). Asn165 and Asn187 each carry an N-linked (GlcNAc...) asparagine glycan. Residue Ser196 is the site of GPI-anchor amidated serine attachment. Residues 197–217 (VYNILNLSLIFVLFSVCFFIM) constitute a propeptide, removed in mature form. A glycan (N-linked (GlcNAc...) asparagine) is linked at Asn202.

The protein resides in the cell membrane. The polypeptide is 25 kDa ookinete surface antigen (Plasmodium reichenowi).